A 329-amino-acid polypeptide reads, in one-letter code: uncharacterized protein (329 aa).

Disordered stretches follow at residues 16-41 and 183-229; these read RCGYPKAQEGTPAEGEQNSRKPSRIC and LENK…KFEP. A compositionally biased stretch (basic and acidic residues) spans 213 to 229; the sequence is SNDKANRGEKGEAKFEP.

Expressed in testis and epididymis. Expressed at lower levels in ovary.

Its function is as follows. Dispensable for normal development and fertility. This is an uncharacterized protein from Mus musculus (Mouse).